The chain runs to 447 residues: Tubulin beta chain (447 aa).

GTP-binding residues include Q11, E69, S138, G142, T143, G144, N204, and N226. Position 69 (E69) interacts with Mg(2+). The tract at residues 421–447 (EYQQYQDASISEGEEEYEEEAPMEPEE) is disordered. Residues 432–447 (EGEEEYEEEAPMEPEE) are compositionally biased toward acidic residues.

The protein belongs to the tubulin family. As to quaternary structure, dimer of alpha and beta chains. A typical microtubule is a hollow water-filled tube with an outer diameter of 25 nm and an inner diameter of 15 nM. Alpha-beta heterodimers associate head-to-tail to form protofilaments running lengthwise along the microtubule wall with the beta-tubulin subunit facing the microtubule plus end conferring a structural polarity. Microtubules usually have 13 protofilaments but different protofilament numbers can be found in some organisms and specialized cells. Mg(2+) is required as a cofactor.

Its subcellular location is the cytoplasm. It is found in the cytoskeleton. Functionally, tubulin is the major constituent of microtubules, a cylinder consisting of laterally associated linear protofilaments composed of alpha- and beta-tubulin heterodimers. Microtubules grow by the addition of GTP-tubulin dimers to the microtubule end, where a stabilizing cap forms. Below the cap, tubulin dimers are in GDP-bound state, owing to GTPase activity of alpha-tubulin. The chain is Tubulin beta chain from Rhynchosporium secalis (Barley scald fungus).